A 565-amino-acid polypeptide reads, in one-letter code: MRQSIFFMPTLKETPADAVAKSHQVMLRGGYIRQVTAGVYSYLPLGYKVLRKTEKIIEEEMANAGVVEMIMPHMLPASMWEESGRLPKYGPEMFRLKDRHGREMLLGPTHEETFTDVVAKSLKSYKQMPLQLYQIQTKFRDENRPRFGLLRGREFVMLDGYSFAASQEQLDKQFDDEKAAYLKIFKRTGVEVRPVIADSGTMGGKNSIEFQAPAAVGEDTIATNASGTYAANLEMAVSVDTFKQEPEELKAMEKVATPGCDSIDKLAEFLQVPATRIVKSVLYIVDEKKKVLVLIRADKEVNEVKLTHLLDCDSLRVAETSDLEELTGAGKGGVGPVNADWADEIVADKTVKGLYNVVVGAGESDAQFINANLDRDFRADRFADLRVANEGEPDPVDHEPLKFTTSIEVGHIFKLGTYYTETMGAKFLDQNGKSQPVIMGSYGIGVTRLLSAVVEQHATENGVAWPKEIAPFGIHIIQMKMKDEIQSKLAEDLEAKFAKYDVLYDDRNERPGVKFNDADLVGAPIRITVGRDAADGIVEVKRPGDDQAQKLAVADLEDFIANELD.

It belongs to the class-II aminoacyl-tRNA synthetase family. ProS type 1 subfamily. Homodimer.

Its subcellular location is the cytoplasm. It catalyses the reaction tRNA(Pro) + L-proline + ATP = L-prolyl-tRNA(Pro) + AMP + diphosphate. Catalyzes the attachment of proline to tRNA(Pro) in a two-step reaction: proline is first activated by ATP to form Pro-AMP and then transferred to the acceptor end of tRNA(Pro). As ProRS can inadvertently accommodate and process non-cognate amino acids such as alanine and cysteine, to avoid such errors it has two additional distinct editing activities against alanine. One activity is designated as 'pretransfer' editing and involves the tRNA(Pro)-independent hydrolysis of activated Ala-AMP. The other activity is designated 'posttransfer' editing and involves deacylation of mischarged Ala-tRNA(Pro). The misacylated Cys-tRNA(Pro) is not edited by ProRS. This is Proline--tRNA ligase from Lactobacillus delbrueckii subsp. bulgaricus (strain ATCC 11842 / DSM 20081 / BCRC 10696 / JCM 1002 / NBRC 13953 / NCIMB 11778 / NCTC 12712 / WDCM 00102 / Lb 14).